A 326-amino-acid polypeptide reads, in one-letter code: MSANLKYLSLGILVFQTTSLVLTMRYSRTLKEEGPRYLSSTAVVVAEFLKIMACIFLVYKDSKCSVRALNRVLHDEILNKPMETLKLAIPSGIYTLQNNLLYVALSNLDAATYQVTYQLKILTTALFSVSMLGKKLGVYQWLSLVILMAGVAFVQWPSDSQELNSKDLSTGSQFVGLMAVLTACFSSGFAGVYFEKILKETKQSVWIRNIQLGFFGSIFGLMGVYVYDGELVSKNGFFQGYNQLTWIVVALQALGGLVIAAVIKYADNILKGFATSLSIILSTIISYFWLQDFVPTSVFFLGAILVIAATFLYGYDPKPAGNPTKA.

8 consecutive transmembrane segments (helical) span residues 4-24 (NLKY…VLTM), 38-58 (LSST…IFLV), 136-156 (LGVY…FVQW), 174-194 (FVGL…GVYF), 212-232 (LGFF…GELV), 243-263 (QLTW…AAVI), 269-289 (ILKG…SYFW), and 293-313 (FVPT…TFLY).

This sequence belongs to the nucleotide-sugar transporter family. SLC35A subfamily. In terms of assembly, interacts with SLC35A2; the interaction is reduced in the presence of SLC35A4. Found in a complex with SLC35A2 and SLC35A4. Interacts with MGAT4B. Post-translationally, O-Glcnacylation regulates the stability of SLC35A3 and the specific complex formation with MGAT4B.

It localises to the golgi apparatus membrane. The catalysed reaction is UMP(out) + UDP-N-acetyl-alpha-D-glucosamine(in) = UMP(in) + UDP-N-acetyl-alpha-D-glucosamine(out). In terms of biological role, transports diphosphate-N-acetylglucosamine (UDP-GlcNAc) from the cytosol into the lumen of the Golgi apparatus, functioning as an antiporter that exchanges UDP-N-acetyl-alpha-D-glucosamine for UMP. May supply UDP-GlcNAc as substrate for Golgi-resident glycosyltransferases that generate highly branched, multiantennary complex N-glycans and keratan sulfate. However, the exact role of SLC35A3 still needs to be elucidated, it could be a member of a catalytically more efficient multiprotein complex rather than function independently as a single transporter. This Mus musculus (Mouse) protein is UDP-N-acetylglucosamine transporter (Slc35a3).